The following is a 1427-amino-acid chain: Protein NPAT (1427 aa).

The segment at 1 to 318 is interaction with MIZF; it reads MLLPSDVARL…EEAIQDILEQ (318 aa). Residues 3 to 35 form the LisH domain; that stretch reads LPSDVARLVLGYLQQENLISTCQTFILESSDLK. Required for activation of histone gene transcription and interaction with MIZF regions lie at residues 5–25 and 121–145; these read SDVARLVLGYLQQENLISTCQ and KRQRKLASQTAPASAELLTLPYLSG. The tract at residues 199 to 231 is disordered; that stretch reads KKAHASLMSPGRRKSESQRKSTTLSGPHSTIRN. At Ser-207 the chain carries Phosphoserine. Positions 218 to 231 are enriched in polar residues; that stretch reads KSTTLSGPHSTIRN. The tract at residues 262 to 338 is mediates transcriptional activation; sequence KLAENINKFL…FDLFDYGKTK (77 aa). Ser-554 and Ser-599 each carry phosphoserine. Residues 628–644 are compositionally biased toward polar residues; sequence SLSSTKQPSNDSASVEL. Disordered regions lie at residues 628-669 and 683-732; these read SLSS…VKEE and EKVA…SAEI. Positions 629–653 are required for acceleration of G1 phase; that stretch reads LSSTKQPSNDSASVELNHTENEAQA. Low complexity predominate over residues 654–665; that stretch reads SKSENSQEPSSS. Positions 695–711 are enriched in polar residues; it reads VENSHSLPPESVCSSVG. 2 positions are modified to phosphoserine; by CDK2: Ser-775 and Ser-779. Required for acceleration of G1 phase regions lie at residues 828–853 and 1039–1054; these read QNEDGIAFSANVTPCVSKDGGYIQLM and KSEETTVPFPEESIVP. Disordered regions lie at residues 1095 to 1121 and 1133 to 1152; these read FPNLDSPNVSSTLKPPSNNAIKREKEK and SAISRHTTIRETQSEKKVSP. Polar residues predominate over residues 1097–1114; the sequence is NLDSPNVSSTLKPPSNNA. Ser-1100 bears the Phosphoserine; by CDK2 mark. Residues Lys-1116 and Lys-1149 each participate in a glycyl lysine isopeptide (Lys-Gly) (interchain with G-Cter in SUMO2) cross-link. Over residues 1140-1151 the composition is skewed to basic and acidic residues; sequence TIRETQSEKKVS. Ser-1151 and Ser-1200 each carry phosphoserine. The residue at position 1228 (Lys-1228) is an N6-acetyllysine. Residues 1228–1252 are required for acceleration of G1 phase; sequence KDLKQEQTKSASSLITTEMLQDIQR. Disordered regions lie at residues 1253 to 1327 and 1348 to 1413; these read HSSV…SENS and SATP…FPAG. Ser-1254 bears the Phosphoserine mark. Residue Thr-1270 is modified to Phosphothreonine; by CDK2. Positions 1276–1285 are enriched in basic and acidic residues; sequence GEKHKEEPID. A Glycyl lysine isopeptide (Lys-Gly) (interchain with G-Cter in SUMO2) cross-link involves residue Lys-1280. The segment at 1325–1349 is required for acceleration of G1 phase; the sequence is ENSVNMAAHTLMILSRAAISRTTSA. Polar residues predominate over residues 1348 to 1365; that stretch reads SATPLKDNTQQFRASSRS. At Thr-1350 the chain carries Phosphothreonine; by CDK2. Residues 1371-1382 show a composition bias toward basic and acidic residues; that stretch reads KIEELDERERNS. The span at 1383–1394 shows a compositional bias: polar residues; sequence RPSSKNLTNSSI. Basic residues predominate over residues 1396-1406; that stretch reads MKKKKIKKKKL.

The protein belongs to the NPAT family. As to quaternary structure, interacts with the cylin/CDK complexes CCNE1/CDK2 and CCNA1/CDK2. Interacts with BZW1, CASP8AP2, CREBBP, MIZF and YY1. Interacts with the RUVBL1, RUVBL2 and TRRAP subunits of the NuA4 complex. May also interact with GAPDH, NME1, NME2 and STIP1. Post-translationally, phosphorylated at Ser-775, Ser-779, Ser-1100, Thr-1270 and Thr-1350 by CCNE1/CDK2 at G1-S transition and until prophase, which promotes association with histone gene clusters and stimulates activation of histone transcription. Also phosphorylated by CCNA1/CDK2 in vitro. Ubiquitously expressed.

Its subcellular location is the nucleus. It localises to the cajal body. Its function is as follows. Required for progression through the G1 and S phases of the cell cycle and for S phase entry. Activates transcription of the histone H2A, histone H2B, histone H3 and histone H4 genes in conjunction with MIZF. Also positively regulates the ATM, MIZF and PRKDC promoters. Transcriptional activation may be accomplished at least in part by the recruitment of the NuA4 histone acetyltransferase (HAT) complex to target gene promoters. The protein is Protein NPAT (NPAT) of Homo sapiens (Human).